The following is a 276-amino-acid chain: MDSACKPTQRRLDAAGFWQIWQRFDADEKGYIEEKELDAFFHHVLTKLGTDDAVMEENVWKMKQQFMAAHDVSKDGHIQMKELACLFLSEDENFLLLFRQETPLDSSVEFMQIWRKYDADSSGFISAAELCNFLRDLFLHHKKAISEAKLEEYTGTMMKIFDKNKDGRLDLNDLARILALQENFLLQFKMDACSTEERKRDFEKIFAHYDVSKTGALEGPEVDGFVKDMMELVQPSISGVDLDKFREILLRHCDVNKDGKIQKSELALCLGLKINP.

EF-hand domains follow at residues 12-47, 58-93, 105-140, 149-184, 197-232, and 240-276; these read LDAA…VLTK, NVWK…EDEN, DSSV…LFLH, KLEE…QENF, ERKR…MMEL, and VDLD…KINP. Residues aspartate 71, serine 73, aspartate 75, histidine 77, glutamate 82, aspartate 118, aspartate 120, serine 122, glutamate 129, aspartate 162, asparagine 164, aspartate 166, arginine 168, aspartate 173, aspartate 210, serine 212, threonine 214, glutamate 221, aspartate 254, asparagine 256, aspartate 258, lysine 260, and glutamate 265 each coordinate Ca(2+).

The protein resides in the cytoplasm. The protein localises to the secreted. Its subcellular location is the cytoplasmic vesicle. It localises to the secretory vesicle membrane. This is Secretagogin (SCGN) from Sus scrofa (Pig).